Here is a 284-residue protein sequence, read N- to C-terminus: Orotidine 5'-phosphate decarboxylase (284 aa).

K95 functions as the Proton donor in the catalytic mechanism.

Belongs to the OMP decarboxylase family. Type 2 subfamily.

It catalyses the reaction orotidine 5'-phosphate + H(+) = UMP + CO2. The protein operates within pyrimidine metabolism; UMP biosynthesis via de novo pathway; UMP from orotate: step 2/2. This is Orotidine 5'-phosphate decarboxylase from Leptothrix cholodnii (strain ATCC 51168 / LMG 8142 / SP-6) (Leptothrix discophora (strain SP-6)).